Reading from the N-terminus, the 244-residue chain is Small ribosomal subunit protein eS4 (244 aa).

Residues 43–106 (LPLLLIVRDT…NENYLVLFDE (64 aa)) enclose the S4 RNA-binding domain.

It belongs to the eukaryotic ribosomal protein eS4 family.

This Methanococcus vannielii protein is Small ribosomal subunit protein eS4 (rps4e).